Here is a 494-residue protein sequence, read N- to C-terminus: Glutamyl-tRNA reductase (494 aa).

Residues 58–61, serine 118, 123–125, and glutamine 129 contribute to the substrate site; these read TCNR and EQQ. Cysteine 59 serves as the catalytic Nucleophile. 205–210 serves as a coordination point for NADP(+); that stretch reads GAGAMA. Residues 448 to 494 form a disordered region; it reads KGANAGSGQRKKQKPQENRVSTARAVYRSTYQDLTQASTPGGKDDDQ. Polar residues predominate over residues 476–486; the sequence is STYQDLTQAST.

This sequence belongs to the glutamyl-tRNA reductase family. As to quaternary structure, homodimer.

The enzyme catalyses (S)-4-amino-5-oxopentanoate + tRNA(Glu) + NADP(+) = L-glutamyl-tRNA(Glu) + NADPH + H(+). The protein operates within porphyrin-containing compound metabolism; protoporphyrin-IX biosynthesis; 5-aminolevulinate from L-glutamyl-tRNA(Glu): step 1/2. Its function is as follows. Catalyzes the NADPH-dependent reduction of glutamyl-tRNA(Glu) to glutamate 1-semialdehyde (GSA). The sequence is that of Glutamyl-tRNA reductase from Corynebacterium urealyticum (strain ATCC 43042 / DSM 7109).